Reading from the N-terminus, the 87-residue chain is Small ribosomal subunit protein uS15 (87 aa).

It belongs to the universal ribosomal protein uS15 family. In terms of assembly, part of the 30S ribosomal subunit. Forms a bridge to the 50S subunit in the 70S ribosome, contacting the 23S rRNA.

In terms of biological role, one of the primary rRNA binding proteins, it binds directly to 16S rRNA where it helps nucleate assembly of the platform of the 30S subunit by binding and bridging several RNA helices of the 16S rRNA. Functionally, forms an intersubunit bridge (bridge B4) with the 23S rRNA of the 50S subunit in the ribosome. This chain is Small ribosomal subunit protein uS15, found in Clostridium botulinum (strain Eklund 17B / Type B).